We begin with the raw amino-acid sequence, 471 residues long: PTS system mannitol-specific EIICB component (471 aa).

Residues 1 to 29 (MTHTSENQAGFRVKIQRFGSYLSGMIMPN) lie on the Cytoplasmic side of the membrane. Positions 18 to 342 (FGSYLSGMIM…FFVASIFLKS (325 aa)) constitute a PTS EIIC type-2 domain. A helical membrane pass occupies residues 30-51 (IGAFIAWGIITALFIPTGWLPN). The Extracellular segment spans residues 52–55 (ETFA). A helical transmembrane segment spans residues 56–76 (KLVGPMITYLLPLLIGYTGGK). At 77–139 (MIYDVRGGVV…QGFEMLVNNF (63 aa)) the chain is on the cytoplasmic side. A helical membrane pass occupies residues 140 to 161 (SAGIIGGLLTLAAFKGVGPVVS). At 162-170 (AISKTLAAG) the chain is on the extracellular side. A helical transmembrane segment spans residues 171-191 (VEKIVDLHLLPLANIFIEPGK). Residues 192-278 (VLFLNNAINH…VLMRPILILA (87 aa)) are Cytoplasmic-facing. A helical transmembrane segment spans residues 279–298 (AIAGGVSGVLTFTIFDAGLV). Topologically, residues 299 to 318 (AVPSPGSIFALLAMTPKGNY) are extracellular. The chain crosses the membrane as a helical span at residues 319–340 (LGVLAGVLVATAVSFFVASIFL). Residues 341–471 (KSAKNNEEDI…YDELIEMLKK (131 aa)) are Cytoplasmic-facing. The PTS EIIB type-2 domain occupies 383–471 (KKIVFACDAG…YDELIEMLKK (89 aa)). Residue Cys389 is the Phosphocysteine intermediate; for EIIB activity of the active site. Cys389 bears the Phosphocysteine; by EIIA mark.

In terms of assembly, homodimer.

The protein localises to the cell membrane. The enzyme catalyses D-mannitol(out) + N(pros)-phospho-L-histidyl-[protein] = D-mannitol 1-phosphate(in) + L-histidyl-[protein]. Functionally, the phosphoenolpyruvate-dependent sugar phosphotransferase system (sugar PTS), a major carbohydrate active transport system, catalyzes the phosphorylation of incoming sugar substrates concomitantly with their translocation across the cell membrane. The enzyme II CmtAB PTS system is involved in D-mannitol transport. The chain is PTS system mannitol-specific EIICB component from Geobacillus stearothermophilus (Bacillus stearothermophilus).